The following is a 185-amino-acid chain: Kunitz-type serine protease inhibitor DrTI (185 aa).

2 cysteine pairs are disulfide-bonded: C44–C89 and C139–C147.

This sequence belongs to the protease inhibitor I3 (leguminous Kunitz-type inhibitor) family.

It is found in the secreted. Inhibits bovine trypsin and human plasma kallikrein. The polypeptide is Kunitz-type serine protease inhibitor DrTI (Delonix regia (Royal poinciana)).